An 85-amino-acid chain; its full sequence is Conotoxin Vx15a (85 aa).

Positions 1 to 23 are cleaved as a signal peptide; sequence MEKLTVLILVATVLLTIQVLAQS. Positions 24-49 are excised as a propeptide; that stretch reads DGDKHLMKRSKQYATKRLSALMRGHR. Gln50 bears the Pyrrolidone carboxylic acid mark.

The protein belongs to the conotoxin O2 superfamily. Post-translationally, contains 4 disulfide bonds. Expressed by the venom duct.

It localises to the secreted. The polypeptide is Conotoxin Vx15a (Conus vexillum (Flag cone)).